An 863-amino-acid polypeptide reads, in one-letter code: DNA-directed RNA polymerase subunit beta' (863 aa).

Residues 1–83 are disordered; it reads MSGEVAQDQP…SKKKETKASQ (83 aa). Polar residues predominate over residues 23-36; sequence EIVNSAITVQSSAK. Cys159, Cys161, Cys180, and Cys183 together coordinate Zn(2+). Mg(2+)-binding residues include Asp621, Asp623, and Asp625.

This sequence belongs to the RNA polymerase beta' chain family. RpoC1 subfamily. In terms of assembly, in plastids the minimal PEP RNA polymerase catalytic core is composed of four subunits: alpha, beta, beta', and beta''. When a (nuclear-encoded) sigma factor is associated with the core the holoenzyme is formed, which can initiate transcription. Requires Mg(2+) as cofactor. Zn(2+) serves as cofactor.

Its subcellular location is the plastid. It is found in the chloroplast. The enzyme catalyses RNA(n) + a ribonucleoside 5'-triphosphate = RNA(n+1) + diphosphate. Functionally, DNA-dependent RNA polymerase catalyzes the transcription of DNA into RNA using the four ribonucleoside triphosphates as substrates. This is DNA-directed RNA polymerase subunit beta' from Nephroselmis olivacea (Green alga).